We begin with the raw amino-acid sequence, 559 residues long: CRISPR-associated exonuclease Cas4/endonuclease Cas1 fusion (559 aa).

Residues methionine 1–proline 198 are CRISPR-associated exonuclease Cas4. Cysteine 22 provides a ligand contact to [4Fe-4S] cluster. The Mn(2+) site is built by aspartate 87 and aspartate 100. [4Fe-4S] cluster contacts are provided by cysteine 187, cysteine 190, and cysteine 196. The CRISPR-associated endonuclease Cas1 stretch occupies residues leucine 224 to arginine 559. Positions 380, 451, and 466 each coordinate Mn(2+).

It in the N-terminal section; belongs to the CRISPR-associated exonuclease Cas4 family. This sequence in the C-terminal section; belongs to the CRISPR-associated endonuclease Cas1 family. Homodimer, forms a heterotetramer with a Cas2 homodimer. It depends on [4Fe-4S] cluster as a cofactor. Mg(2+) serves as cofactor. The cofactor is Mn(2+).

It carries out the reaction exonucleolytic cleavage in the 5'- to 3'-direction to yield nucleoside 3'-phosphates.. CRISPR (clustered regularly interspaced short palindromic repeat), is an adaptive immune system that provides protection against mobile genetic elements (viruses, transposable elements and conjugative plasmids). CRISPR clusters contain spacers, sequences complementary to antecedent mobile elements, and target invading nucleic acids. CRISPR clusters are transcribed and processed into CRISPR RNA (crRNA). The Cas4 region acts as a ssDNA exonuclease, while the Cas1 region acts as a dsDNA endonuclease. Involved in the integration of spacer DNA into the CRISPR cassette. The sequence is that of CRISPR-associated exonuclease Cas4/endonuclease Cas1 fusion (cas4-cas1) from Geobacter sulfurreducens (strain ATCC 51573 / DSM 12127 / PCA).